The sequence spans 357 residues: Dehydrogenase FUB6 (357 aa).

The protein belongs to the zinc-containing alcohol dehydrogenase family. Quinone oxidoreductase subfamily.

The protein operates within mycotoxin biosynthesis. In terms of biological role, dehydrogenase; part of the gene cluster that mediates the biosynthesis of fusaric acid, a mycotoxin with low to moderate toxicity to animals and humans, but with high phytotoxic properties. L-aspartate is suggested as fusaric acid amino acid precursor that is activated and further processed to O-acetyl-L-homoserine by cluster enzymes aspartate kinase FUB3 and homoserine O-acetyltransferase FUB5, as well as enzymes of the primary metabolism. The polyketide synthase (PKS) FUB1 generates the triketide trans-2-hexenal which is presumptively released by the hydrolase FUB4 and linked to the NRPS-bound amino acid precursor by NAD(P)-dependent dehydrogenase FUB6. FUB1, FUB4, and the non-canonical NRPS Fub8 may form an enzyme complex. Further processing of the NRPS-bound intermediate might be carried out by FUB6 and the O-acetylhomoserine FUB7, enabling a spontaneous electrocyclization to close the carbon backbone of fusaric acid. Dihydrofusaric acid is likely to be released via reduction by the thioester reductase (TR) domain of FUB8 whereupon the final oxidation to fusaric acid may (also) be performed by the FMN-dependent dehydrogenase FUB9. The chain is Dehydrogenase FUB6 from Gibberella moniliformis (strain M3125 / FGSC 7600) (Maize ear and stalk rot fungus).